The sequence spans 36 residues: uncharacterized protein (36 aa).

This is an uncharacterized protein from Saccharomyces cerevisiae (strain ATCC 204508 / S288c) (Baker's yeast).